The sequence spans 586 residues: Ezrin (586 aa).

Residues Pro2–Arg295 form the FERM domain. Position 60 is an N6-acetyllysine (Lys60). Residues Ile115 to Glu120 carry the [IL]-x-C-x-x-[DE] motif motif. At Tyr146 the chain carries Phosphotyrosine; by PDGFR. Positions Glu244 to Met586 are interaction with SCYL3. Positions Val302–Glu462 form a coiled coil. Residues Lys306 to Glu338 are disordered. Basic and acidic residues predominate over residues Gln308–Glu338. The residue at position 354 (Tyr354) is a Phosphotyrosine; by PDGFR. Ser366 is modified (phosphoserine). The residue at position 478 (Tyr478) is a Phosphotyrosine. Residues Leu534–Tyr565 form a disordered region. Ser535 bears the Phosphoserine mark. Over residues Gln540 to Tyr565 the composition is skewed to basic and acidic residues. The residue at position 567 (Thr567) is a Phosphothreonine; by ROCK2 and PKC/PRKCI.

In terms of assembly, interacts with PALS1 and NHERF2. Found in a complex with EZR, PODXL and NHERF2. Interacts with MCC, PLEKHG6, PODXL, SCYL3/PACE1, NHERF1 and TMEM8B. Interacts (when phosphorylated) with FES/FPS. Interacts with dimeric S100P, the interaction may be activating through unmasking of F-actin binding sites. Identified in complexes that contain VIM, EZR, AHNAK, BFSP1, BFSP2, ANK2, PLEC, PRX and spectrin. Detected in a complex composed of at least EZR, AHNAK, PPL and PRX. Interacts with PDPN (via cytoplasmic domain); activates RHOA and promotes epithelial-mesenchymal transition. Interacts with SPN/CD43 cytoplasmic tail. Interacts with CD44 and ICAM2. Interacts with SLC9A3; interaction targets SLC9A3 to the apical membrane. Interacts with SLC9A1; regulates interactions of SLC9A1 with cytoskeletal and promotes stress fiber formation. Interacts with CLIC5; may work together in a complex which also includes RDX and MYO6 to stabilize linkages between the plasma membrane and subjacent actin cytoskeleton at the base of stereocilia. Post-translationally, phosphorylated by tyrosine-protein kinases. Phosphorylation by ROCK2 suppresses the head-to-tail association of the N-terminal and C-terminal halves resulting in an opened conformation which is capable of actin and membrane-binding. In terms of processing, S-nitrosylation is induced by interferon-gamma and oxidatively-modified low-densitity lipoprotein (LDL(ox)) possibly implicating the iNOS-S100A8/9 transnitrosylase complex. In terms of tissue distribution, detected in eye lens fiber cells. Expressed in cerebrum and cerebellum (at protein level). Component of the microvilli of intestinal epithelial cells.

The protein resides in the apical cell membrane. Its subcellular location is the cell projection. The protein localises to the microvillus membrane. It is found in the ruffle membrane. It localises to the cytoplasm. The protein resides in the cell cortex. Its subcellular location is the cytoskeleton. The protein localises to the microvillus. A head-to-tail association, of the N-terminal and C-terminal halves results in a closed conformation (inactive form) which is incapable of actin or membrane-binding. Probably involved in connections of major cytoskeletal structures to the plasma membrane. In epithelial cells, required for the formation of microvilli and membrane ruffles on the apical pole. Along with PLEKHG6, required for normal macropinocytosis. The sequence is that of Ezrin (Ezr) from Mus musculus (Mouse).